We begin with the raw amino-acid sequence, 240 residues long: MILYPAIDLKDGQAVRLLHGDMDKTTVFNDNPAAQALEFVAAGCEWLHLVDLNGAFAGEPVNAAPVEEILRQCKVPAQLGGGIRDMATIERWLDKGLARVILGTVAVENPDLVREAARAFPGKVAVGIDARNGKVATKGWAEETDVEVTDLAKSFEDAGVAAIIYTDIMRDGAMKGPNIDATAALANAVSIPVIASGGVSSLEDLHALKSCGAALNGAISGRALYDGAIDLAEALAVLKG.

The active-site Proton acceptor is the Asp8. The Proton donor role is filled by Asp129.

This sequence belongs to the HisA/HisF family.

The protein resides in the cytoplasm. The enzyme catalyses 1-(5-phospho-beta-D-ribosyl)-5-[(5-phospho-beta-D-ribosylamino)methylideneamino]imidazole-4-carboxamide = 5-[(5-phospho-1-deoxy-D-ribulos-1-ylimino)methylamino]-1-(5-phospho-beta-D-ribosyl)imidazole-4-carboxamide. It functions in the pathway amino-acid biosynthesis; L-histidine biosynthesis; L-histidine from 5-phospho-alpha-D-ribose 1-diphosphate: step 4/9. The sequence is that of 1-(5-phosphoribosyl)-5-[(5-phosphoribosylamino)methylideneamino] imidazole-4-carboxamide isomerase 2 from Ruegeria sp. (strain TM1040) (Silicibacter sp.).